Here is a 470-residue protein sequence, read N- to C-terminus: MTPFMTEDFLLDTEFARRLYHDYAKDQPIFDYHCHLPPQQIAEDYRFKNLYDIWLKGDHYKWRAMRTNGVAERLCTGDASDREKFDAWAATVPHTIGNPLYHWTHLELRRPFGITGKLLSPSTADEIWNECNELLAQDNFSARGIMQQMNVKMVGTTDDPIDSLEHHAEIAKDGSFTIKVLPSWRPDKAFNIEQATFNDYMAKLGEVSDTDIRRFADLQTGLTKRLDHFAAHGCKVSDHALDVVMFAEANEAELDSILARRLAGETLSEHEVAQFKTAVLVFLGAEYARRGWVQQYHIGALRNNNLRQFKLLGPDVGFDSINDRPMAEELSKLLSKQNEENLLPKTILYCLNPRDNEVLGTMIGNFQGEGMPGKMQFGSGWWFNDQKDGMERQMTQLAQLGLLSRFVGMLTDSRSFLSYTRHEYFRRILCQMIGRWVEAGEAPADINLLGEMVKNICFNNARDYFAIELN.

It belongs to the metallo-dependent hydrolases superfamily. Uronate isomerase family.

It catalyses the reaction D-glucuronate = D-fructuronate. It carries out the reaction aldehydo-D-galacturonate = keto-D-tagaturonate. It functions in the pathway carbohydrate metabolism; pentose and glucuronate interconversion. The chain is Uronate isomerase from Shigella boydii serotype 18 (strain CDC 3083-94 / BS512).